A 207-amino-acid polypeptide reads, in one-letter code: Chloramphenicol acetyltransferase (207 aa).

His186 serves as the catalytic Proton acceptor.

This sequence belongs to the chloramphenicol acetyltransferase family. Homotrimer.

The enzyme catalyses chloramphenicol + acetyl-CoA = chloramphenicol 3-acetate + CoA. Its function is as follows. This enzyme is an effector of chloramphenicol resistance in bacteria. The protein is Chloramphenicol acetyltransferase (catP) of Clostridium perfringens.